Here is a 327-residue protein sequence, read N- to C-terminus: Pantothenate kinase (327 aa).

105-112 (GSVAVGKS) contacts ATP.

It belongs to the prokaryotic pantothenate kinase family.

The protein localises to the cytoplasm. It catalyses the reaction (R)-pantothenate + ATP = (R)-4'-phosphopantothenate + ADP + H(+). It functions in the pathway cofactor biosynthesis; coenzyme A biosynthesis; CoA from (R)-pantothenate: step 1/5. This chain is Pantothenate kinase, found in Cutibacterium acnes (strain DSM 16379 / KPA171202) (Propionibacterium acnes).